The primary structure comprises 286 residues: Energy-coupling factor transporter ATP-binding protein EcfA2 (286 aa).

Residues 3-244 (IKVENVSFIY…AERLEKIGLS (242 aa)) enclose the ABC transporter domain. 40-47 (GHTGSGKS) serves as a coordination point for ATP.

Belongs to the ABC transporter superfamily. Energy-coupling factor EcfA family. In terms of assembly, forms a stable energy-coupling factor (ECF) transporter complex composed of 2 membrane-embedded substrate-binding proteins (S component), 2 ATP-binding proteins (A component) and 2 transmembrane proteins (T component).

The protein localises to the cell membrane. Functionally, ATP-binding (A) component of a common energy-coupling factor (ECF) ABC-transporter complex. Unlike classic ABC transporters this ECF transporter provides the energy necessary to transport a number of different substrates. The polypeptide is Energy-coupling factor transporter ATP-binding protein EcfA2 (Caldanaerobacter subterraneus subsp. tengcongensis (strain DSM 15242 / JCM 11007 / NBRC 100824 / MB4) (Thermoanaerobacter tengcongensis)).